Consider the following 622-residue polypeptide: Chaperone protein DnaK (622 aa).

T197 bears the Phosphothreonine; by autocatalysis mark. 2 stretches are compositionally biased toward basic and acidic residues: residues 515–528 (LHKE…EAVE) and 575–614 (ASKE…KKDD). 2 disordered regions span residues 515–537 (LHKE…DSLV) and 575–622 (ASKE…AEVE).

Belongs to the heat shock protein 70 family.

Functionally, acts as a chaperone. This Campylobacter lari (strain RM2100 / D67 / ATCC BAA-1060) protein is Chaperone protein DnaK.